Consider the following 70-residue polypeptide: Beta-defensin 107 (70 aa).

A signal peptide spans Met1–Thr26. Cystine bridges form between Cys41-Cys55 and Cys45-Cys64.

This sequence belongs to the beta-defensin family. Specifically expressed in testis.

It localises to the secreted. Its function is as follows. Has antibacterial activity. In Homo sapiens (Human), this protein is Beta-defensin 107 (DEFB107A).